An 823-amino-acid chain; its full sequence is Leucine--tRNA ligase (823 aa).

Residues 42–52 carry the 'HIGH' region motif; it reads PYPSGTLHMGH. A 'KMSKS' region motif is present at residues 575–579; the sequence is KMSKS. Lysine 578 lines the ATP pocket.

Belongs to the class-I aminoacyl-tRNA synthetase family.

It localises to the cytoplasm. It carries out the reaction tRNA(Leu) + L-leucine + ATP = L-leucyl-tRNA(Leu) + AMP + diphosphate. The protein is Leucine--tRNA ligase of Legionella pneumophila (strain Lens).